A 183-amino-acid chain; its full sequence is MDHLTKEQIAEFREAFNLFDKDGDGTITSKELGTVMGSLGQSPTEAELKKMVEEVDADGSGSIEFEEFLGLLARKLRDTGAEDDIREAFRVFDKDQNGFITPDELRHVMANLGDPLSDDELADMLHEADSDGDGQINYNEFLKVMMAKRRQNMMEGHGSGGHRSSNSHKKSGCCGPNSSCTIL.

4 EF-hand domains span residues Glu-7–Ser-42, Pro-43–Asp-78, Gly-80–Pro-115, and Leu-116–Gln-151. The Ca(2+) site is built by Asp-20, Asp-22, Asp-24, Thr-26, Glu-31, Asp-56, Asp-58, Ser-60, Ser-62, Glu-67, Asp-93, Asp-95, Asn-97, Glu-104, Asp-129, Asp-131, Asp-133, Gln-135, and Glu-140. The disordered stretch occupies residues Met-154–Leu-183. Residues Cys-173 and Cys-174 are each lipidated (S-palmitoyl cysteine). Residue Cys-180 is modified to Cysteine methyl ester. The S-farnesyl cysteine moiety is linked to residue Cys-180. Positions Thr-181–Leu-183 are cleaved as a propeptide — removed in mature form.

The protein belongs to the calmodulin family.

Its subcellular location is the membrane. Its function is as follows. Potential calcium sensor. The sequence is that of Putative calmodulin-like protein 2 (CML2) from Oryza sativa subsp. japonica (Rice).